Here is a 52-residue protein sequence, read N- to C-terminus: SVTSYGLSAVVPLKDVVPEWVRIGFSATTGAEYAAHEVLSWSFHSELGGTSS.

It belongs to the leguminous lectin family. As to quaternary structure, tetramer of two alpha and two beta chains.

This is Mitogenic lectin alpha chain from Vicia sativa (Spring vetch).